The following is a 504-amino-acid chain: Glucose-6-phosphate isomerase (504 aa).

The Proton donor role is filled by Glu-333. Active-site residues include His-364 and Lys-473.

This sequence belongs to the GPI family.

Its subcellular location is the cytoplasm. It catalyses the reaction alpha-D-glucose 6-phosphate = beta-D-fructose 6-phosphate. Its pathway is carbohydrate biosynthesis; gluconeogenesis. It functions in the pathway carbohydrate degradation; glycolysis; D-glyceraldehyde 3-phosphate and glycerone phosphate from D-glucose: step 2/4. Catalyzes the reversible isomerization of glucose-6-phosphate to fructose-6-phosphate. The polypeptide is Glucose-6-phosphate isomerase (Xanthomonas axonopodis pv. citri (strain 306)).